Consider the following 366-residue polypeptide: Ribosomal RNA large subunit methyltransferase M (366 aa).

Residues serine 188, 221-224 (CPGG), aspartate 240, aspartate 260, and aspartate 277 contribute to the S-adenosyl-L-methionine site. Lysine 306 (proton acceptor) is an active-site residue.

The protein belongs to the class I-like SAM-binding methyltransferase superfamily. RNA methyltransferase RlmE family. RlmM subfamily. In terms of assembly, monomer.

It localises to the cytoplasm. The catalysed reaction is cytidine(2498) in 23S rRNA + S-adenosyl-L-methionine = 2'-O-methylcytidine(2498) in 23S rRNA + S-adenosyl-L-homocysteine + H(+). Catalyzes the 2'-O-methylation at nucleotide C2498 in 23S rRNA. This is Ribosomal RNA large subunit methyltransferase M from Salmonella dublin (strain CT_02021853).